The sequence spans 620 residues: MQPHLSHQPCWSLPSPSVREAASMYGTAVAIFLVILVAALQGSEPPESPFPYHIPLDPEGTLELSWNVSYDQEIIHFQLQVQGPRAGVLFGMSDRGEMENADLVMLWTDGDRTYFADAWSDQKGQIHLDTHQDYQLLQAQRVSNSLSLLFKRPFVTCDPKDYVIEDDTVHLVYGILEEPFQSLEAINTSGLHTGLQQVQLLKPEVSTPAMPADVQTMDIRAPDVLIPSTETTYWCYITELPLHFPRHHIIMYEAIVTEGNEALVHHMEVFQCTNESEAFPMFNGPCDSKMKPDRLNYCRHVLAAWALGAKAFYYPEEAGVPLGSSGSSRFLRLEVHYHNPRNIQGRRDSSGIRLHYTASLRPNEAGIMELGLVYTPLMAIPPQETTFVLTGYCTDRCTQMALPKSGIRIFASQLHTHLTGRKVITVLARDGQQREVVNRDNHYSPHFQEIRMLKNAVTVHQGDVLITSCTYNTENRTMATVGGFGILEEMCVNYVHYYPKTELELCKSAVDDGFLQKYFHIVNRFGNEEVCTCPQASVPQQFASVPWNSFNRDMLKALYNYAPISVHCNKTSAVRFPGNWNLQPLPNITSAVEEPDPRCPIRQTRGPAGPFVVITHGGRH.

Over 1-19 (MQPHLSHQPCWSLPSPSVR) the chain is Cytoplasmic. Residues 20-40 (EAASMYGTAVAIFLVILVAAL) traverse the membrane as a helical; Signal-anchor for type II membrane protein segment. The Intragranular portion of the chain corresponds to 41–620 (QGSEPPESPF…FVVITHGGRH (580 aa)). Residues 60 to 176 (GTLELSWNVS…DTVHLVYGIL (117 aa)) enclose the DOMON domain. Residues asparagine 67 and asparagine 187 are each glycosylated (N-linked (GlcNAc...) asparagine). Cystine bridges form between cysteine 157-cysteine 599, cysteine 235-cysteine 286, cysteine 272-cysteine 298, cysteine 393-cysteine 506, cysteine 397-cysteine 568, and cysteine 469-cysteine 491. The active site involves tyrosine 233. Positions 265 and 266 each coordinate Cu(2+). Asparagine 274 carries N-linked (GlcNAc...) asparagine glycosylation. A Cu(2+)-binding site is contributed by histidine 336. Position 349 is a phosphoserine; by CaMK (serine 349). The active site involves histidine 415. Cu(2+)-binding residues include histidine 415 and histidine 417. The N-linked (GlcNAc...) asparagine glycan is linked to asparagine 475. Methionine 490 provides a ligand contact to Cu(2+). Residues asparagine 569 and asparagine 587 are each glycosylated (N-linked (GlcNAc...) asparagine).

Belongs to the copper type II ascorbate-dependent monooxygenase family. In terms of assembly, homotetramer; composed of two disulfide-linked dimers. It depends on Cu(2+) as a cofactor. Proteolytic cleavage after the membrane-anchor leads to the release of the soluble form. In terms of processing, N-glycosylated. As to expression, chromaffin granules of the adrenal medulla and synaptic vesicles of the sympathetic nervous system.

It is found in the cytoplasmic vesicle. It localises to the secretory vesicle lumen. Its subcellular location is the secretory vesicle. The protein resides in the chromaffin granule lumen. The protein localises to the secreted. It is found in the secretory vesicle membrane. It localises to the chromaffin granule membrane. It carries out the reaction dopamine + 2 L-ascorbate + O2 = (R)-noradrenaline + 2 monodehydro-L-ascorbate radical + H2O. It participates in catecholamine biosynthesis; (R)-noradrenaline biosynthesis; (R)-noradrenaline from dopamine: step 1/1. Functionally, catalyzes the hydroxylation of dopamine to noradrenaline (also known as norepinephrine), and is thus vital for regulation of these neurotransmitters. This is Dopamine beta-hydroxylase (Dbh) from Rattus norvegicus (Rat).